Consider the following 373-residue polypeptide: MPPCPPQPNRNRLPQLPTGELGEMELTWQEIMSITELQGLNVPSEPSFEPQAPTPYPGPLPPPTYCPCSIHPDAGFTLPPPPYELPASTPHAPDLPYSYGNIAIPVSKPLTLSGLLNEPLPDPLALLDIGLPVGQPKPQEDPESDSGLSLNYSDAESLELEGTEAGRRRSEYVDMYPVEYPYSLMPNSLAHPNYTLPPTETPLVLESSSGPVRAKPAVRGEAGSRDERRALAMKIPFPTDKIVNLPVDDFNELLAQYPLTESQLALVRDIRRRGKNKVAAQNCRKRKLETIVQLERELERLGSERERLLRARGEADRTLEVMRQQLTELYHDIFQHLRDESGNSYSPEEYVLQQAADGAIFLVPRGTKMEATD.

Disordered stretches follow at residues 1 to 22 (MPPC…GELG) and 40 to 60 (LNVP…PGPL). The segment at 1 to 83 (MPPCPPQPNR…AGFTLPPPPY (83 aa)) is required for interaction with MAPK8. The interval 1-206 (MPPCPPQPNR…PPTETPLVLE (206 aa)) is transactivation domain. 2 short sequence motifs (PXY motif) span residues 61–65 (PPPTY) and 79–83 (PPPPY). The tract at residues 131–163 (LPVGQPKPQEDPESDSGLSLNYSDAESLELEGT) is disordered. Ser157 carries the phosphoserine; by MAPK8 modification. Ser170 carries the post-translational modification Phosphoserine; by PKA. Residues 206–225 (ESSSGPVRAKPAVRGEAGSR) are disordered. The region spanning 266 to 329 (LVRDIRRRGK…EVMRQQLTEL (64 aa)) is the bZIP domain. The basic motif stretch occupies residues 268 to 287 (RDIRRRGKNKVAAQNCRKRK). The tract at residues 291–298 (IVQLEREL) is leucine-zipper. Residue Lys368 forms a Glycyl lysine isopeptide (Lys-Gly) (interchain with G-Cter in SUMO); alternate linkage. A Glycyl lysine isopeptide (Lys-Gly) (interchain with G-Cter in SUMO1); alternate cross-link involves residue Lys368.

Belongs to the bZIP family. CNC subfamily. Homodimer; can bind DNA as a homodimer. Erythroid transcription activator nuclear factor erythroid-derived 2 (NF-E2), composed of a heterodimer of NFE2 and MAFK, possesses transactivation activity on beta-globin. Also forms high affinity heterodimer with MAFG; the interaction promotes erythropoiesis. Interacts (via the PXY motif 1) with ITCH (via the WW 1 domain); the interaction promotes 'Lys63'-linked ubiquitination of NFE2, translocates it to the cytoplasm and inhibits its transactivation activity. Interacts with KMT2D/MLL2; the interaction promotes transactivation of the beta-globin locus. Interacts with MAPK8 (phosphorylated form); the interaction leads to phosphorylation of NFE2 in undifferentiated cells. Phosphorylated on serine residues. In undifferentiated erythrocytes, phosphorylated by MAPK8 which then leads to ubiquitination and protein degradation. In terms of processing, sumoylated. Sumoylation is required for translocation to nuclear bodies PODs, anchoring to the gene loci, and transactivation of the beta-globin gene. Post-translationally, ubiquitinated mainly by 'Lys63'-linked ubiquitin. Polyubiquitination with 'Lys63'-linked ubiquitin by ITCH retains NFE2 in the cytoplasm preventing its transactivation activity. In undifferentiated erythrocyte, ubiquitinated after MAPK8-mediatd phosphorylation leading to protein degradation.

It is found in the nucleus. Its subcellular location is the PML body. The protein localises to the cytoplasm. In terms of biological role, component of the NF-E2 complex essential for regulating erythroid and megakaryocytic maturation and differentiation. Binds to the hypersensitive site 2 (HS2) of the beta-globin control region (LCR). This subunit (NFE2) recognizes the TCAT/C sequence of the AP-1-like core palindrome present in a number of erythroid and megakaryocytic gene promoters. Requires MAFK or other small MAF proteins for binding to the NF-E2 motif. May play a role in all aspects of hemoglobin production from globin and heme synthesis to procurement of iron. In Rattus norvegicus (Rat), this protein is Transcription factor NF-E2 45 kDa subunit (Nfe2).